Consider the following 89-residue polypeptide: NADH-ubiquinone oxidoreductase chain 4L (89 aa).

3 helical membrane-spanning segments follow: residues 1–21 (MNFS…NRKN), 22–42 (IILM…LILI), and 55–75 (FAVY…GILV).

It belongs to the complex I subunit 4L family.

The protein resides in the mitochondrion membrane. The catalysed reaction is a ubiquinone + NADH + 5 H(+)(in) = a ubiquinol + NAD(+) + 4 H(+)(out). Functionally, core subunit of the mitochondrial membrane respiratory chain NADH dehydrogenase (Complex I) that is believed to belong to the minimal assembly required for catalysis. Complex I functions in the transfer of electrons from NADH to the respiratory chain. The immediate electron acceptor for the enzyme is believed to be ubiquinone. The sequence is that of NADH-ubiquinone oxidoreductase chain 4L (nd4L) from Aspergillus niger.